Here is a 392-residue protein sequence, read N- to C-terminus: 4-hydroxybenzoate polyprenyltransferase, mitochondrial (392 aa).

Residues 1–22 (MYALRHLRLQSARHFRSSYAAA) constitute a mitochondrion transit peptide. Helical transmembrane passes span 90 to 110 (IGTY…ADAG), 115 to 135 (LTML…GCTI), 163 to 183 (FDAI…LVQL), 184 to 204 (NWQS…YPLM), 207 to 227 (VTYW…LLGW), 236 to 256 (LAAC…YDTI), 283 to 303 (VWLS…GWAC), 307 to 327 (VPYY…IYSL), and 339 to 359 (FISN…GTLL). Positions 365–392 (KKQRQSSLTTSTASSYVPALPQKPEVLS) are disordered. The segment covering 369–379 (QSSLTTSTASS) has biased composition (polar residues).

The protein belongs to the UbiA prenyltransferase family. Mg(2+) serves as cofactor.

The protein resides in the mitochondrion inner membrane. It carries out the reaction an all-trans-polyprenyl diphosphate + 4-hydroxybenzoate = a 4-hydroxy-3-(all-trans-polyprenyl)benzoate + diphosphate. The protein operates within cofactor biosynthesis; ubiquinone biosynthesis. Catalyzes the prenylation of para-hydroxybenzoate (PHB) with an all-trans polyprenyl group. Mediates the second step in the final reaction sequence of coenzyme Q (CoQ) biosynthesis, which is the condensation of the polyisoprenoid side chain with PHB, generating the first membrane-bound Q intermediate. The sequence is that of 4-hydroxybenzoate polyprenyltransferase, mitochondrial from Drosophila melanogaster (Fruit fly).